The sequence spans 562 residues: tRNA (guanine(37)-N(1))-methyltransferase (562 aa).

The transit peptide at 1–41 directs the protein to the mitochondrion; sequence MLFRRFLNLTTKTPHLQTFRARHYFRNMSCPELIPPPTVRG. Residues His-243, 281–282, and Asn-340 contribute to the S-adenosyl-L-methionine site; that span reads DL. Basic and acidic residues predominate over residues 523–534; it reads AHIVAKKPEKKP. The tract at residues 523–562 is disordered; sequence AHIVAKKPEKKPLPAKPASKKNKNQANTKQVEAGLDKMQM.

The protein belongs to the class I-like SAM-binding methyltransferase superfamily. TRM5/TYW2 family. Monomer.

The protein resides in the mitochondrion matrix. It localises to the nucleus. Its subcellular location is the cytoplasm. The enzyme catalyses guanosine(37) in tRNA + S-adenosyl-L-methionine = N(1)-methylguanosine(37) in tRNA + S-adenosyl-L-homocysteine + H(+). Its function is as follows. Specifically methylates the N1 position of guanosine-37 in various cytoplasmic and mitochondrial tRNAs. Methylation is not dependent on the nature of the nucleoside 5' of the target nucleoside. This is the first step in the biosynthesis of wybutosine (yW), a modified base adjacent to the anticodon of tRNAs and required for accurate decoding. The chain is tRNA (guanine(37)-N(1))-methyltransferase from Aedes aegypti (Yellowfever mosquito).